Here is a 463-residue protein sequence, read N- to C-terminus: SPARC-related modular calcium-binding protein 1 (463 aa).

Residues 1–25 (MLPARVRLLTPHLLLVLVQLSPAGG) form the signal peptide. One can recognise a Kazal-like domain in the interval 36–88 (SDRDPPCNPHCPRTQPKPICASDGRSYESMCEYQRAKCRDPALAVVHRGRCKD). Disulfide bonds link Cys-42/Cys-73, Cys-46/Cys-66, Cys-55/Cys-86, Cys-94/Cys-117, Cys-128/Cys-135, and Cys-137/Cys-157. Residues 91–157 (QSKCRLERAQ…SSVQNKTPVC (67 aa)) enclose the Thyroglobulin type-1 1 domain. Asn-224 carries N-linked (GlcNAc...) asparagine glycosylation. One can recognise a Thyroglobulin type-1 2 domain in the interval 234–302 (VHSCDQERQS…TSTRYVMPSC (69 aa)). Disulfide bonds link Cys-237-Cys-261, Cys-272-Cys-279, and Cys-281-Cys-302. 2 EF-hand domains span residues 369–404 (LEER…VKKK) and 406–441 (KPKK…SKEG). The Ca(2+) site is built by Asp-382, Asn-384, Ser-386, Asp-388, Glu-393, Asp-419, Asn-421, Asp-423, and Glu-430. Asn-384 carries an N-linked (GlcNAc...) asparagine glycan.

Glycosylated. As to expression, widely expressed in many tissues with a strongest signal in ovary.

It localises to the secreted. The protein localises to the extracellular space. Its subcellular location is the extracellular matrix. It is found in the basement membrane. In terms of biological role, probable regulator of osteoblast differentiation. Plays essential roles in both eye and limb development. This is SPARC-related modular calcium-binding protein 1 (Smoc1) from Mus musculus (Mouse).